The chain runs to 375 residues: tRNA-specific 2-thiouridylase MnmA (375 aa).

ATP contacts are provided by residues 12 to 19 (GMSGGVDS) and M38. The segment at 98 to 100 (NPD) is interaction with target base in tRNA. Catalysis depends on C103, which acts as the Nucleophile. Cysteines 103 and 200 form a disulfide. An ATP-binding site is contributed by G127. The interval 150–152 (KDQ) is interaction with tRNA. The Cysteine persulfide intermediate role is filled by C200. The tract at residues 312-313 (RY) is interaction with tRNA.

Belongs to the MnmA/TRMU family.

It localises to the cytoplasm. It catalyses the reaction S-sulfanyl-L-cysteinyl-[protein] + uridine(34) in tRNA + AH2 + ATP = 2-thiouridine(34) in tRNA + L-cysteinyl-[protein] + A + AMP + diphosphate + H(+). Functionally, catalyzes the 2-thiolation of uridine at the wobble position (U34) of tRNA, leading to the formation of s(2)U34. This is tRNA-specific 2-thiouridylase MnmA from Lactobacillus delbrueckii subsp. bulgaricus (strain ATCC BAA-365 / Lb-18).